We begin with the raw amino-acid sequence, 374 residues long: Mannitol-1-phosphate 5-dehydrogenase (374 aa).

Position 3–14 (3–14) interacts with NAD(+); the sequence is AVHFGAGNIGRG.

Belongs to the mannitol dehydrogenase family.

It catalyses the reaction D-mannitol 1-phosphate + NAD(+) = beta-D-fructose 6-phosphate + NADH + H(+). In Shouchella clausii (strain KSM-K16) (Alkalihalobacillus clausii), this protein is Mannitol-1-phosphate 5-dehydrogenase.